The following is a 178-amino-acid chain: ATP synthase subunit delta (178 aa).

It belongs to the ATPase delta chain family. F-type ATPases have 2 components, F(1) - the catalytic core - and F(0) - the membrane proton channel. F(1) has five subunits: alpha(3), beta(3), gamma(1), delta(1), epsilon(1). F(0) has three main subunits: a(1), b(2) and c(10-14). The alpha and beta chains form an alternating ring which encloses part of the gamma chain. F(1) is attached to F(0) by a central stalk formed by the gamma and epsilon chains, while a peripheral stalk is formed by the delta and b chains.

The protein localises to the cell membrane. Functionally, f(1)F(0) ATP synthase produces ATP from ADP in the presence of a proton or sodium gradient. F-type ATPases consist of two structural domains, F(1) containing the extramembraneous catalytic core and F(0) containing the membrane proton channel, linked together by a central stalk and a peripheral stalk. During catalysis, ATP synthesis in the catalytic domain of F(1) is coupled via a rotary mechanism of the central stalk subunits to proton translocation. This protein is part of the stalk that links CF(0) to CF(1). It either transmits conformational changes from CF(0) to CF(1) or is implicated in proton conduction. This chain is ATP synthase subunit delta, found in Moorella thermoacetica (strain ATCC 39073 / JCM 9320).